The primary structure comprises 295 residues: Proline iminopeptidase (295 aa).

An AB hydrolase-1 domain is found at threonine 35–aspartate 279. The active-site Nucleophile is the serine 107. Residue aspartate 246 is part of the active site. Residue histidine 273 is the Proton donor of the active site.

It belongs to the peptidase S33 family. Part of the tricorn proteolytic complex.

It carries out the reaction Release of N-terminal proline from a peptide.. Its function is as follows. Cleaves H-Pro-AMC as well as a wide spectrum of amino acid substrates and several peptide substrates without a proline at the N-terminus. In conjunction with the three factors F1, F2 and F3, Tricorn degrades oligopeptides in a sequential manner, yielding free amino acids. The sequence is that of Proline iminopeptidase (pip) from Thermoplasma volcanium (strain ATCC 51530 / DSM 4299 / JCM 9571 / NBRC 15438 / GSS1).